A 311-amino-acid chain; its full sequence is Manganese-dependent inorganic pyrophosphatase (311 aa).

Residues H10, D14, D16, D75, H97, and D149 each coordinate Mn(2+).

It belongs to the PPase class C family. In terms of assembly, homodimer. The cofactor is Mn(2+).

The enzyme catalyses diphosphate + H2O = 2 phosphate + H(+). This Methanothrix thermoacetophila (strain DSM 6194 / JCM 14653 / NBRC 101360 / PT) (Methanosaeta thermophila) protein is Manganese-dependent inorganic pyrophosphatase (ppaC).